The following is an 883-amino-acid chain: Aldehyde-alcohol dehydrogenase (883 aa).

An aldehyde dehydrogenase region spans residues 13 to 456 (KLVAEKHVDE…DNVSAINLLN (444 aa)). Residues 121 to 126 (ITPTTN), Gly206, and Gly224 each bind NAD(+). Catalysis depends on Cys257, which acts as the Nucleophile. NAD(+) is bound by residues Glu355, Leu435, and 438–443 (GSYGRN). The interval 457 to 464 (IKKVGRRR) is linker. Residues Asp500, Asp534, 561–565 (GSPMD), 612–613 (TT), Val625, Lys634, and Leu653 each bind NAD(+). Positions 668, 672, 736, and 750 each coordinate Fe cation.

The protein in the N-terminal section; belongs to the aldehyde dehydrogenase family. It in the C-terminal section; belongs to the iron-containing alcohol dehydrogenase family. Requires Fe(2+) as cofactor.

The catalysed reaction is ethanol + NAD(+) = acetaldehyde + NADH + H(+). It carries out the reaction an aldehyde + NAD(+) + H2O = a carboxylate + NADH + 2 H(+). Functionally, has alcohol dehydrogenase activity. Has aldehyde dehydrogenase activity. May play a role in enhancing virulence in mice. May be considered a potential virulence factor. This Streptococcus pneumoniae serotype 4 (strain ATCC BAA-334 / TIGR4) protein is Aldehyde-alcohol dehydrogenase.